Consider the following 502-residue polypeptide: Cardiolipin synthase (502 aa).

3 helical membrane passes run 7 to 27 (VAILIVIVGVLLTLTHDYWGG), 29 to 49 (LLGIFSVLISCSVVFIAFVIS), and 59 to 79 (IAWLAVLGSFPFLGFLFYLLF). PLD phosphodiesterase domains lie at 237 to 264 (INFRNHRKIIVIDGGVGFVGGLNIGDEY) and 415 to 442 (EKGFLHSKVIVVDGELASIGTANMDMRS). Active-site residues include histidine 242, lysine 244, aspartate 249, histidine 420, lysine 422, and aspartate 427.

The protein belongs to the phospholipase D family. Cardiolipin synthase subfamily.

It localises to the cell membrane. It carries out the reaction 2 a 1,2-diacyl-sn-glycero-3-phospho-(1'-sn-glycerol) = a cardiolipin + glycerol. Its function is as follows. Catalyzes the reversible phosphatidyl group transfer from one phosphatidylglycerol molecule to another to form cardiolipin (CL) (diphosphatidylglycerol) and glycerol. The protein is Cardiolipin synthase (cls) of Geobacillus thermodenitrificans (strain NG80-2).